We begin with the raw amino-acid sequence, 447 residues long: Putative FBD-associated F-box protein At1g61330 (447 aa).

The 48-residue stretch at 10-57 (KLIKRLSDELVECILSFLPVQSTLQHRVLSKRYRDTWKLSRDLDFSGI) folds into the F-box domain. In terms of domain architecture, FBD spans 384–416 (VKIIGYKGHWHELDIVEFFVKNAPSLKRLELQM).

The protein is Putative FBD-associated F-box protein At1g61330 of Arabidopsis thaliana (Mouse-ear cress).